The following is a 305-amino-acid chain: Coenzyme PQQ synthesis protein B (305 aa).

This sequence belongs to the PqqB family.

It functions in the pathway cofactor biosynthesis; pyrroloquinoline quinone biosynthesis. Its function is as follows. May be involved in the transport of PQQ or its precursor to the periplasm. The chain is Coenzyme PQQ synthesis protein B from Methylobacillus flagellatus.